A 627-amino-acid polypeptide reads, in one-letter code: Sphingomyelin phosphodiesterase (627 aa).

Residues 1-44 (MPHHRASSGQDHLRAGWEQRLERSLPAPRVGLLWMGLGLALVLA) form the signal peptide. A Saposin B-type domain is found at 83–167 (QNLTCPACKV…LLGSSCGHWD (85 aa)). A glycan (N-linked (GlcNAc...) asparagine) is linked at Asn84. 3 disulfides stabilise this stretch: Cys87-Cys163, Cys90-Cys155, and Cys118-Cys129. Residue Asn173 is glycosylated (N-linked (GlcNAc...) asparagine). Residues Asp204 and His206 each contribute to the Zn(2+) site. Disulfide bonds link Cys219/Cys224 and Cys225/Cys248. Zn(2+)-binding residues include Asp276 and Asn316. 2 N-linked (GlcNAc...) asparagine glycosylation sites follow: Asn333 and Asn393. A disulfide bond links Cys383 and Cys429. Zn(2+) is bound by residues His423, His455, and His457. Phosphoserine is present on Ser506. Asn518 carries N-linked (GlcNAc...) asparagine glycosylation. Cystine bridges form between Cys582–Cys586 and Cys592–Cys605. The N-linked (GlcNAc...) asparagine glycan is linked to Asn611.

The protein belongs to the acid sphingomyelinase family. As to quaternary structure, monomer. Interacts with SORT1; the interaction is required for SMPD1 targeting to lysosomes. The cofactor is Zn(2+). In terms of processing, proteolytically processed. Mature lysosomal form arises from C-terminal proteolytic processing of pro-sphingomyelin phosphodiesterase. Post-translationally, both lysosomal and secreted forms are glycosylated but they show a differential pattern of glycosylation. Phosphorylated at Ser-506 by PRKCD upon stress stimuli. Phosphorylation is required for secretion. In terms of processing, this form is generated following cleavage by CASP7 in the extracellular milieu. It shows increased activity.

Its subcellular location is the lysosome. It localises to the lipid droplet. The protein localises to the secreted. It is found in the extracellular space. It carries out the reaction a sphingomyelin + H2O = phosphocholine + an N-acylsphing-4-enine + H(+). The enzyme catalyses N-(octadecanoyl)-sphing-4-enine-1-phosphocholine + H2O = N-octadecanoylsphing-4-enine + phosphocholine + H(+). The catalysed reaction is a 1,2-diacyl-sn-glycero-3-phosphocholine + H2O = phosphocholine + a 1,2-diacyl-sn-glycerol + H(+). It catalyses the reaction 1,2-dihexadecanoyl-sn-glycero-3-phosphocholine + H2O = 1,2-dihexadecanoyl-sn-glycerol + phosphocholine + H(+). Its activity is regulated as follows. Hydrolysis of liposomal sphingomyelin is stimulated by incorporation of diacylglycerol (DAG), ceramide and free fatty acids into the liposomal membranes. Phosphatidylcholine hydrolysis is inhibited by incorporation of cholesterol, ceramide, DAG, monoacylglycerol and fatty acids. Functionally, converts sphingomyelin to ceramide. Exists as two enzymatic forms that arise from alternative trafficking of a single protein precursor, one that is targeted to the endolysosomal compartment, whereas the other is released extracellularly. However, in response to various forms of stress, lysosomal exocytosis may represent a major source of the secretory form. In terms of biological role, in the lysosomes, converts sphingomyelin to ceramide. Plays an important role in the export of cholesterol from the intraendolysosomal membranes. Also has phospholipase C activities toward 1,2-diacylglycerolphosphocholine and 1,2-diacylglycerolphosphoglycerol. Modulates stress-induced apoptosis through the production of ceramide. When secreted, modulates cell signaling with its ability to reorganize the plasma membrane by converting sphingomyelin to ceramide. Secreted form is increased in response to stress and inflammatory mediators such as IL1B, IFNG or TNF as well as upon infection with bacteria and viruses. Produces the release of ceramide in the outer leaflet of the plasma membrane playing a central role in host defense. Ceramide reorganizes these rafts into larger signaling platforms that are required to internalize P.aeruginosa, induce apoptosis and regulate the cytokine response in infected cells. In wounded cells, the lysosomal form is released extracellularly in the presence of Ca(2+) and promotes endocytosis and plasma membrane repair. Its function is as follows. This form is generated following cleavage by CASP7 in the extracellular milieu in response to bacterial infection. It shows increased ability to convert sphingomyelin to ceramide and promotes plasma membrane repair. Plasma membrane repair by ceramide counteracts the action of gasdermin-D (GSDMD) perforin (PRF1) pores that are formed in response to bacterial infection. Functionally, (Microbial infection) Secretion is activated by bacteria such as P.aeruginosa, this activation results in the release of ceramide in the outer leaflet of the plasma membrane which facilitates the infection. This is Sphingomyelin phosphodiesterase from Mus musculus (Mouse).